The sequence spans 486 residues: Wax ester synthase/diacylglycerol acyltransferase 11 (486 aa).

Residues 1–192 lie on the Cytoplasmic side of the membrane; that stretch reads MGEDKKTARE…CNSGFFNKIW (192 aa). His144 serves as the catalytic Proton acceptor. A helical transmembrane segment spans residues 193-213; sequence WLFVGLWFILRLLFNTFVDIL. Over 214 to 486 the chain is Extracellular; it reads MFALTIFVLR…LERGLYEIEV (273 aa).

It in the N-terminal section; belongs to the long-chain O-acyltransferase family. In terms of tissue distribution, mostly expressed in inflorescences and flowers, especially at the periphery of petal epidermal cells.

It localises to the cell membrane. The protein resides in the endoplasmic reticulum membrane. It catalyses the reaction an acyl-CoA + a 1,2-diacyl-sn-glycerol = a triacyl-sn-glycerol + CoA. The enzyme catalyses a long chain fatty alcohol + a fatty acyl-CoA = a wax ester + CoA. It participates in glycerolipid metabolism; triacylglycerol biosynthesis. The protein operates within lipid metabolism. Bifunctional wax ester synthase/diacylglycerol acyltransferase. Involved in cuticular wax biosynthesis. Required for petals development, probably by mediating the production of fatty acids at the plasma membrane in the petal epidermis acting as lubricants that makes petal elongation smooth in narrow space between the sepals and the anthers inside floral buds. The protein is Wax ester synthase/diacylglycerol acyltransferase 11 of Arabidopsis thaliana (Mouse-ear cress).